The chain runs to 1575 residues: Ovochymase (1575 aa).

The signal sequence occupies residues 1 to 19 (MIVTFVALALSCCTPQVTA). One can recognise a Peptidase S1 1 domain in the interval 36-280 (IVGGEMAKLG…YSSWIANYTQ (245 aa)). Cys-61 and Cys-77 form a disulfide bridge. Residues His-76 and Asp-132 each act as charge relay system in the active site. Cystine bridges form between Cys-166–Cys-233, Cys-199–Cys-212, and Cys-223–Cys-256. The active-site Charge relay system is Ser-227. Residues Asn-277 and Asn-303 are each glycosylated (N-linked (GlcNAc...) asparagine). Cystine bridges form between Cys-300–Cys-330, Cys-358–Cys-386, Cys-432–Cys-460, and Cys-486–Cys-507. 2 consecutive CUB domains span residues 300–423 (CSSN…FHAV) and 432–545 (CGGI…YYFS). 3 N-linked (GlcNAc...) asparagine glycosylation sites follow: Asn-497, Asn-513, and Asn-549. In terms of domain architecture, Peptidase S1 2 spans 575-810 (IVNGDIAIAG…YIDWIIATAN (236 aa)). A disulfide bridge connects residues Cys-602 and Cys-618. Catalysis depends on charge relay system residues His-617 and Asp-665. 3 cysteine pairs are disulfide-bonded: Cys-700/Cys-766, Cys-730/Cys-745, and Cys-756/Cys-786. Asn-748 carries N-linked (GlcNAc...) asparagine glycosylation. The active-site Charge relay system is the Ser-760. Asn-810 carries N-linked (GlcNAc...) asparagine glycosylation. Disulfide bonds link Cys-830/Cys-859, Cys-889/Cys-913, Cys-956/Cys-984, Cys-1012/Cys-1034, Cys-1080/Cys-1108, Cys-1135/Cys-1158, and Cys-1221/Cys-1246. 4 consecutive CUB domains span residues 830 to 949 (CIQL…YRLE), 956 to 1070 (CGQL…FVEL), 1080 to 1197 (CGGV…YTAV), and 1221 to 1341 (CQDS…YKLM). Asn-968, Asn-1027, Asn-1087, and Asn-1090 each carry an N-linked (GlcNAc...) asparagine glycan. Asn-1273 is a glycosylation site (N-linked (GlcNAc...) asparagine). The 262-residue stretch at 1314–1575 (YNGGEISMLF…FLKWITKIIQ (262 aa)) folds into the Peptidase S1 3 domain. 2 cysteine pairs are disulfide-bonded: Cys-1376-Cys-1392 and Cys-1493-Cys-1507. Asn-1511 carries N-linked (GlcNAc...) asparagine glycosylation.

The protein belongs to the peptidase S1 family. In terms of tissue distribution, expressed in the testis and ovary. Expressed in the gonads and gametes. Expressed in the follicle cells covering the vitelline coat of ovarian egg.

It is found in the secreted. Its function is as follows. May be responsible for elevation of the vitelline coat at the late developmental stage of oogenesis and during fertilization in ovarian eggs. The chain is Ovochymase from Halocynthia roretzi (Sea squirt).